A 292-amino-acid chain; its full sequence is MSNKAKIEVFPELESATGQMIIIDEQTKKCAILDSVLNYTQNNGRTSTKDADKLIAYIKENQLEPEWILETHIHADHLSGAHYLKGIYPNAKTAIGEGAKIVQKTFKTIYNLEHTFPTDGSQFDKLFTDDERFTIGSLQVRVISTPGHTPACVSYYIENDSVFVGDTMFMPDVGTARCDFPNGSAETLWTSMKKILELPETVKVYVCHDYPPQERGITFFTTIAEQRLSNKHIKDSVTKDEFIKMRTERDATLKAPQLLLPSIQVNIRAGELPPKEDNGISYIKIPLNYLKQ.

Positions 72, 74, 76, 77, 148, and 166 each coordinate Zn(2+). Residues 175–181, 208–210, and 284–287 each bind substrate; these read TARCDFP, HDY, and KIPL. Histidine 208 contacts Zn(2+).

Belongs to the metallo-beta-lactamase superfamily. Glyoxalase II family. Zn(2+) serves as cofactor.

The chain is Glyoxylase B2 (gloB2) from Dictyostelium discoideum (Social amoeba).